Reading from the N-terminus, the 576-residue chain is Non-neuronal cytoplasmic intermediate filament protein (576 aa).

The interval 1 to 51 (MTSKISTTYEEEGRQSKIQPRAFVITRSGPSSKSSSFSARQSYASSRQSIT) is disordered. Residues 2–75 (TSKISTTYEE…FRGTREKEKR (74 aa)) are head. The segment covering 28 to 49 (SGPSSKSSSFSARQSYASSRQS) has biased composition (low complexity). Positions 73 to 425 (EKREMQNLNE…KLLEGEESRV (353 aa)) constitute an IF rod domain. Residues 76 to 108 (EMQNLNERLASYIEKVHFLDAQVKKLEAENEAL) are coil 1A. Positions 109–122 (RNRKSESLQPIRDA) are linker 1. Positions 123–260 (YENELAQARK…DLLDQLELLK (138 aa)) are coil 1B. Residues 261 to 278 (PEPIQIKGMDYAEFWKSE) form a linker 2 region. Positions 279–425 (LSKCVREIQS…KLLEGEESRV (147 aa)) are coil 2. The tract at residues 426-576 (GLRSLVEQAI…KATLIAKFSG (151 aa)) is tail. An LTD domain is found at 456 to 574 (GSMTIQRSSK…NEKATLIAKF (119 aa)).

The protein belongs to the intermediate filament family. As to quaternary structure, can form homopolymers.

It is found in the cytoplasm. This Cornu aspersum (Brown garden snail) protein is Non-neuronal cytoplasmic intermediate filament protein.